The following is a 199-amino-acid chain: Holliday junction branch migration complex subunit RuvA (199 aa).

Positions 1–64 are domain I; that stretch reads MIGRITGILL…EDGHFLYGFA (64 aa). The segment at 65 to 143 is domain II; that stretch reads SADERAAFRQ…RALPGFGAST (79 aa). A flexible linker region spans residues 144–152; the sequence is VPGAAAQPA. Positions 152–199 are domain III; the sequence is ADSRSDILNALLALGYSDKEAQSALKAIPPETGVSDGIRQALKLLSKA.

The protein belongs to the RuvA family. In terms of assembly, homotetramer. Forms an RuvA(8)-RuvB(12)-Holliday junction (HJ) complex. HJ DNA is sandwiched between 2 RuvA tetramers; dsDNA enters through RuvA and exits via RuvB. An RuvB hexamer assembles on each DNA strand where it exits the tetramer. Each RuvB hexamer is contacted by two RuvA subunits (via domain III) on 2 adjacent RuvB subunits; this complex drives branch migration. In the full resolvosome a probable DNA-RuvA(4)-RuvB(12)-RuvC(2) complex forms which resolves the HJ.

Its subcellular location is the cytoplasm. Functionally, the RuvA-RuvB-RuvC complex processes Holliday junction (HJ) DNA during genetic recombination and DNA repair, while the RuvA-RuvB complex plays an important role in the rescue of blocked DNA replication forks via replication fork reversal (RFR). RuvA specifically binds to HJ cruciform DNA, conferring on it an open structure. The RuvB hexamer acts as an ATP-dependent pump, pulling dsDNA into and through the RuvAB complex. HJ branch migration allows RuvC to scan DNA until it finds its consensus sequence, where it cleaves and resolves the cruciform DNA. This Aromatoleum aromaticum (strain DSM 19018 / LMG 30748 / EbN1) (Azoarcus sp. (strain EbN1)) protein is Holliday junction branch migration complex subunit RuvA.